A 295-amino-acid chain; its full sequence is Glycine N-acyltransferase-like protein Keg1 (295 aa).

Lysine 41 is subject to N6-acetyllysine; alternate. Lysine 41 carries the post-translational modification N6-succinyllysine; alternate. N6-acetyllysine is present on lysine 43. At lysine 48 the chain carries N6-acetyllysine; alternate. N6-succinyllysine; alternate is present on lysine 48. An N6-acetyllysine mark is found at lysine 80 and lysine 83. 3 positions are modified to N6-acetyllysine; alternate: lysine 124, lysine 128, and lysine 140. 3 positions are modified to N6-succinyllysine; alternate: lysine 124, lysine 128, and lysine 140. Lysine 150 carries the N6-acetyllysine modification. N6-acetyllysine; alternate is present on lysine 255. An N6-succinyllysine; alternate modification is found at lysine 255.

This sequence belongs to the glycine N-acyltransferase family. As to quaternary structure, binds to microtubules.

It localises to the cytoplasm. Its subcellular location is the cytoskeleton. The protein resides in the microtubule organizing center. It is found in the centrosome. The enzyme catalyses an acyl-CoA + glycine = an N-acylglycine + CoA + H(+). Acyltransferase which transfers the acyl group to the N-terminus of glycine. Can conjugate a multitude of substrates to form a variety of N-acylglycines. This is Glycine N-acyltransferase-like protein Keg1 (Keg1) from Mus musculus (Mouse).